The chain runs to 326 residues: RNA-binding motif protein, X-linked 2 (326 aa).

K8 participates in a covalent cross-link: Glycyl lysine isopeptide (Lys-Gly) (interchain with G-Cter in SUMO2). One can recognise an RRM domain in the interval 36–114 (AWIFVGGLPY…RTIRVDHVSN (79 aa)). The interval 117–326 (APQESEDVDD…SYHGSDRRHH (210 aa)) is disordered. The residue at position 140 (T140) is a Phosphothreonine. A Phosphoserine modification is found at S149. Positions 157 to 172 (TKKHKKDKKEKKKRKK) are enriched in basic residues. Over residues 177 to 190 (GQAQAEQPSCSRSA) the composition is skewed to polar residues. 4 stretches are compositionally biased toward basic and acidic residues: residues 191 to 200 (TVKEKKDERA), 207 to 219 (KTSE…EHRE), 236 to 245 (ARAEDPECKA), and 255 to 273 (KSAS…ERGR). At S274 the chain carries Phosphoserine. Residues 291-312 (HRSRSRSRSPDKSHRHKKYRHS) show a composition bias toward basic residues. Residues 313–326 (RERDSYHGSDRRHH) show a composition bias toward basic and acidic residues.

Belongs to the IST3 family. As to quaternary structure, part of the activated spliceosome B/catalytic step 1 spliceosome, one of the forms of the spliceosome which has a well-formed active site but still cannot catalyze the branching reaction and is composed of at least 52 proteins, the U2, U5 and U6 snRNAs and the pre-mRNA. Component of the minor spliceosome, which splices U12-type introns.

Its subcellular location is the nucleus. Its function is as follows. Involved in pre-mRNA splicing as component of the activated spliceosome. As a component of the minor spliceosome, involved in the splicing of U12-type introns in pre-mRNAs. This is RNA-binding motif protein, X-linked 2 (Rbmx2) from Mus musculus (Mouse).